A 622-amino-acid chain; its full sequence is MSTDNKQSLPAITLAAIGVVYGDIGTSPLYTLRECLSGQFGFGVERDAVFGFLSLIFWLLIFVVSIKYLTFVMRADNAGEGGILTLMSLAGRNTSARTTSMLVIMGLIGGSFFYGEVVITPAISVMSAIEGLEIVAPQLDTWIVPLSIIVLTLLFMIQKHGTAMVGKLFAPIMLTWFLILAGLGLRSIIANQEVLYALNPMWAVHFFLEYKTVSFIALGAVVLSITGVEALYADMGHFGKFPIRLAWFTVVLPSLTLNYFGQGALLLKNPEAIKNPFFLLAPDWALIPLLIIAALATVIASQAVISGVFSLTRQAVRLGYLSPMRIIHTSEMESGQIYIPFVNWMLYVAVVIVIVSFEHSSNLAAAYGIAVTGTMVLTSILSTTVARQNWHWNKYFVALILIAFLCVDIPLFTANLDKLLSGGWLPLSLGTVMFIVMTTWKSERFRLLRRMHEHGNSLEAMIASLEKSPPVRVPGTAVYMSRAINVIPFALMHNLKHNKVLHERVILLTLRTEDAPYVHNVRRVQIEQLSPTFWRVVASYGWRETPNVEEVFHRCGLEGLSCRMMETSFFMSHESLILGKRPWYLRLRGKLYLLLQRNALRAPDQFEIPPNRVIELGTQVEI.

Transmembrane regions (helical) follow at residues 9–29 (LPAI…TSPL), 49–69 (VFGF…IKYL), 103–123 (VIMG…TPAI), 137–157 (PQLD…LFMI), 165–185 (VGKL…GLGL), 213–233 (VSFI…ALYA), 247–267 (WFTV…ALLL), 276–296 (PFFL…AALA), 337–357 (IYIP…IVSF), 363–383 (LAAA…ILST), 396–416 (FVAL…TANL), and 419–439 (LLSG…VMTT).

The protein belongs to the HAK/KUP transporter (TC 2.A.72) family.

Its subcellular location is the cell inner membrane. The enzyme catalyses K(+)(in) + H(+)(in) = K(+)(out) + H(+)(out). In terms of biological role, responsible for the low-affinity transport of potassium into the cell. Likely operates as a K(+):H(+) symporter. The sequence is that of Low affinity potassium transport system protein Kup from Escherichia coli O157:H7.